Reading from the N-terminus, the 423-residue chain is Histidine--tRNA ligase 2 (423 aa).

This sequence belongs to the class-II aminoacyl-tRNA synthetase family. As to quaternary structure, homodimer.

The protein localises to the cytoplasm. The enzyme catalyses tRNA(His) + L-histidine + ATP = L-histidyl-tRNA(His) + AMP + diphosphate + H(+). The protein is Histidine--tRNA ligase 2 of Bacillus anthracis.